The following is a 135-amino-acid chain: Small ribosomal subunit protein bS6 (135 aa).

Residue K93 is modified to N6-acetyllysine. Residues 98 to 135 (EASPMVKAKDERRERRDDFANETADDAEAGDSEEEEEE) are disordered. Residues 104–116 (KAKDERRERRDDF) are compositionally biased toward basic and acidic residues. Positions 120–135 (TADDAEAGDSEEEEEE) are enriched in acidic residues.

The protein belongs to the bacterial ribosomal protein bS6 family. In terms of assembly, part of the 30S ribosomal subunit. Interacts weakly with uL2 in one of the 3.5 A resolved structures. 5 different forms of the protein, varying only in the number of C-terminal glutamate residues, were isolated. The sequence shown is form bS6-6, which is the longest. The first two Glu are encoded by the rpsF gene, the other Glu are added post-translationally by the RimK enzyme.

Functionally, binds together with bS18 to 16S ribosomal RNA. The chain is Small ribosomal subunit protein bS6 (rpsF) from Escherichia coli (strain K12).